The following is a 445-amino-acid chain: GTPase Obg (445 aa).

Residues 7–164 (PEFVDCVTVE…RKLRLEVKSI (158 aa)) form the Obg domain. The 178-residue stretch at 165 to 342 (ADVALVGFPS…FTLRLGEICQ (178 aa)) folds into the OBG-type G domain. GTP is bound by residues 171–178 (GFPSVGKS), 196–200 (FTTLH), 217–220 (DVPG), 291–294 (NKID), and 323–325 (SAV). Ser-178 and Thr-198 together coordinate Mg(2+). The OCT domain maps to 357 to 434 (IPAKNTPEFS…IGGVIFTWDP (78 aa)).

Belongs to the TRAFAC class OBG-HflX-like GTPase superfamily. OBG GTPase family. In terms of assembly, monomer. Mg(2+) serves as cofactor.

It is found in the cytoplasm. In terms of biological role, an essential GTPase which binds GTP, GDP and possibly (p)ppGpp with moderate affinity, with high nucleotide exchange rates and a fairly low GTP hydrolysis rate. Plays a role in control of the cell cycle, stress response, ribosome biogenesis and in those bacteria that undergo differentiation, in morphogenesis control. This chain is GTPase Obg, found in Tropheryma whipplei (strain Twist) (Whipple's bacillus).